The chain runs to 317 residues: Melanocyte-stimulating hormone receptor (317 aa).

At 1-37 (MPVQGSQRRLLGSLNSTPTATPHLGLAANQTGARCLE) the chain is on the extracellular side. Asn-29 carries an N-linked (GlcNAc...) asparagine glycan. Residues 38–63 (VSIPDGLFLSLGLVSLVENVLVVTAI) traverse the membrane as a helical segment. The Cytoplasmic segment spans residues 64 to 72 (AKNRNLHSP). Residues 73–93 (MYCFICCLALSDLLVSGSNML) form a helical membrane-spanning segment. Topologically, residues 94–118 (ETAVTLLLEAGALAARAAVVQQLDN) are extracellular. A helical transmembrane segment spans residues 119–140 (VIDVITCSSMLSSLCFLGAIAV). Residues 141–163 (DRYISIFYALRYHSIVTLPRARR) lie on the Cytoplasmic side of the membrane. A helical membrane pass occupies residues 164–183 (AVAAIWVASVLFSMLFIAYY). At 184-191 (DHAAVLLC) the chain is on the extracellular side. The chain crosses the membrane as a helical span at residues 192–211 (LVVFFLAMLVLMAVLYVHML). The Cytoplasmic segment spans residues 212–240 (ARACQHAQGIARLHKRQRPAHQGFGLKGA). A helical membrane pass occupies residues 241 to 266 (ATLTILLGIFFLCWGPFFLHLTLIVL). The Extracellular segment spans residues 267–279 (CPQHPTCSCIFKN). A helical membrane pass occupies residues 280–300 (FNLFLALIICNAIIDPLIYAF). Residues 301–317 (RSQELRRTLKEVLLCSW) lie on the Cytoplasmic side of the membrane. A lipid anchor (S-palmitoyl cysteine) is attached at Cys-315.

The protein belongs to the G-protein coupled receptor 1 family. Interacts with MGRN1, but does not undergo MGRN1-mediated ubiquitination; this interaction competes with GNAS-binding and thus inhibits agonist-induced cAMP production. Interacts with OPN3; the interaction results in a decrease in MC1R-mediated cAMP signaling and ultimately a decrease in melanin production in melanocytes.

The protein localises to the cell membrane. Functionally, receptor for MSH (alpha, beta and gamma) and ACTH. The activity of this receptor is mediated by G proteins which activate adenylate cyclase. Mediates melanogenesis, the production of eumelanin (black/brown) and phaeomelanin (red/yellow), via regulation of cAMP signaling in melanocytes. The sequence is that of Melanocyte-stimulating hormone receptor (MC1R) from Miopithecus talapoin (Angolan talapoin).